A 547-amino-acid polypeptide reads, in one-letter code: Chaperonin GroEL (547 aa).

ATP contacts are provided by residues 30–33 (TLGP), lysine 51, 87–91 (DGTTT), glycine 415, 479–481 (NAA), and aspartate 495. The tract at residues 525 to 547 (PKEDKPDLGGGNPGGAGGMGGMM) is disordered. A compositionally biased stretch (gly residues) spans 532–547 (LGGGNPGGAGGMGGMM).

Belongs to the chaperonin (HSP60) family. Forms a cylinder of 14 subunits composed of two heptameric rings stacked back-to-back. Interacts with the co-chaperonin GroES.

The protein resides in the cytoplasm. The catalysed reaction is ATP + H2O + a folded polypeptide = ADP + phosphate + an unfolded polypeptide.. In terms of biological role, together with its co-chaperonin GroES, plays an essential role in assisting protein folding. The GroEL-GroES system forms a nano-cage that allows encapsulation of the non-native substrate proteins and provides a physical environment optimized to promote and accelerate protein folding. This chain is Chaperonin GroEL, found in Blochmanniella floridana.